The following is a 464-amino-acid chain: ATP synthase subunit beta (464 aa).

Position 153–160 (Gly153–Thr160) interacts with ATP.

This sequence belongs to the ATPase alpha/beta chains family. As to quaternary structure, F-type ATPases have 2 components, CF(1) - the catalytic core - and CF(0) - the membrane proton channel. CF(1) has five subunits: alpha(3), beta(3), gamma(1), delta(1), epsilon(1). CF(0) has three main subunits: a(1), b(2) and c(9-12). The alpha and beta chains form an alternating ring which encloses part of the gamma chain. CF(1) is attached to CF(0) by a central stalk formed by the gamma and epsilon chains, while a peripheral stalk is formed by the delta and b chains.

The protein localises to the cell membrane. The catalysed reaction is ATP + H2O + 4 H(+)(in) = ADP + phosphate + 5 H(+)(out). Functionally, produces ATP from ADP in the presence of a proton gradient across the membrane. The catalytic sites are hosted primarily by the beta subunits. The sequence is that of ATP synthase subunit beta from Alkaliphilus metalliredigens (strain QYMF).